A 224-amino-acid polypeptide reads, in one-letter code: 2-C-methyl-D-erythritol 4-phosphate cytidylyltransferase (224 aa).

Belongs to the IspD/TarI cytidylyltransferase family. IspD subfamily.

The catalysed reaction is 2-C-methyl-D-erythritol 4-phosphate + CTP + H(+) = 4-CDP-2-C-methyl-D-erythritol + diphosphate. It functions in the pathway isoprenoid biosynthesis; isopentenyl diphosphate biosynthesis via DXP pathway; isopentenyl diphosphate from 1-deoxy-D-xylulose 5-phosphate: step 2/6. Its function is as follows. Catalyzes the formation of 4-diphosphocytidyl-2-C-methyl-D-erythritol from CTP and 2-C-methyl-D-erythritol 4-phosphate (MEP). This Clostridium botulinum (strain Eklund 17B / Type B) protein is 2-C-methyl-D-erythritol 4-phosphate cytidylyltransferase.